The chain runs to 681 residues: Minichromosome maintenance domain-containing protein 2 (681 aa).

Phosphoserine is present on Ser-292. One can recognise an MCM domain in the interval 533 to 621 (KQFTTEDFEK…LIAALLFEIS (89 aa)).

In terms of biological role, plays an important role in meiotic recombination and associated DNA double-strand break repair. In Rattus norvegicus (Rat), this protein is Minichromosome maintenance domain-containing protein 2 (Mcmdc2).